Reading from the N-terminus, the 522-residue chain is Anthranilate synthase component 1 (522 aa).

Residues serine 40 and 292–294 (PYM) contribute to the L-tryptophan site. Chorismate is bound at residue 329–330 (GT). Glutamate 362 is a binding site for Mg(2+). Chorismate is bound by residues tyrosine 450, arginine 470, 484–486 (GAG), and glycine 486. Glutamate 499 serves as a coordination point for Mg(2+).

This sequence belongs to the anthranilate synthase component I family. Heterotetramer consisting of two non-identical subunits: a beta subunit (TrpG) and a large alpha subunit (TrpE). Mg(2+) serves as cofactor.

The enzyme catalyses chorismate + L-glutamine = anthranilate + pyruvate + L-glutamate + H(+). The protein operates within amino-acid biosynthesis; L-tryptophan biosynthesis; L-tryptophan from chorismate: step 1/5. Its activity is regulated as follows. Feedback inhibited by tryptophan. In terms of biological role, part of a heterotetrameric complex that catalyzes the two-step biosynthesis of anthranilate, an intermediate in the biosynthesis of L-tryptophan. In the first step, the glutamine-binding beta subunit (TrpG) of anthranilate synthase (AS) provides the glutamine amidotransferase activity which generates ammonia as a substrate that, along with chorismate, is used in the second step, catalyzed by the large alpha subunit of AS (TrpE) to produce anthranilate. In the absence of TrpG, TrpE can synthesize anthranilate directly from chorismate and high concentrations of ammonia. The protein is Anthranilate synthase component 1 (trpE) of Buchnera aphidicola subsp. Baizongia pistaciae (strain Bp).